The primary structure comprises 258 residues: Aspartate/glutamate leucyltransferase (258 aa).

The protein belongs to the R-transferase family. Bpt subfamily.

The protein localises to the cytoplasm. The enzyme catalyses N-terminal L-glutamyl-[protein] + L-leucyl-tRNA(Leu) = N-terminal L-leucyl-L-glutamyl-[protein] + tRNA(Leu) + H(+). It carries out the reaction N-terminal L-aspartyl-[protein] + L-leucyl-tRNA(Leu) = N-terminal L-leucyl-L-aspartyl-[protein] + tRNA(Leu) + H(+). Functions in the N-end rule pathway of protein degradation where it conjugates Leu from its aminoacyl-tRNA to the N-termini of proteins containing an N-terminal aspartate or glutamate. The sequence is that of Aspartate/glutamate leucyltransferase from Rhodopseudomonas palustris (strain BisA53).